Reading from the N-terminus, the 350-residue chain is N-acetyllactosaminide beta-1,3-N-acetylglucosaminyltransferase 4 (350 aa).

Residues 1 to 4 (MLPR) lie on the Cytoplasmic side of the membrane. The helical; Signal-anchor for type II membrane protein transmembrane segment at 5–25 (LGCVLFCSLVVLLLSCLLLLK) threads the bilayer. Residues 26–350 (ERIPAGSSKA…RLKCAATHKP (325 aa)) lie on the Lumenal side of the membrane. N53 and N166 each carry an N-linked (GlcNAc...) asparagine glycan.

Belongs to the glycosyltransferase 31 family.

It is found in the golgi apparatus membrane. The enzyme catalyses a beta-D-galactosyl-(1-&gt;4)-N-acetyl-beta-D-glucosaminyl derivative + UDP-N-acetyl-alpha-D-glucosamine = an N-acetyl-beta-D-glucosaminyl-(1-&gt;3)-beta-D-galactosyl-(1-&gt;4)-N-acetyl-beta-D-glucosaminyl derivative + UDP + H(+). It functions in the pathway protein modification; protein glycosylation. Its function is as follows. Beta-1,3-N-acetylglucosaminyltransferase involved in the synthesis of poly-N-acetyllactosamine. Has activity for type 2 oligosaccharides. This Mus musculus (Mouse) protein is N-acetyllactosaminide beta-1,3-N-acetylglucosaminyltransferase 4 (B3gnt4).